The following is a 378-amino-acid chain: Odorant receptor 33a (378 aa).

Topologically, residues 1–33 are cytoplasmic; that stretch reads MDSRRKVRSENLYKTYWLYWRLLGVEGDYPFRR. A helical transmembrane segment spans residues 34–54; it reads LVDFTITSFITILFPVHLILG. Over 55–62 the chain is Extracellular; the sequence is MYKKPQIQ. The chain crosses the membrane as a helical span at residues 63–83; that stretch reads VFRSLHFTSECLFCSYKFFCF. Residues 84–127 are Cytoplasmic-facing; the sequence is RWKLKEIKTIEGLLQDLDSRVESEEERNYFNQNPSRVARMLSKS. The helical transmembrane segment at 128 to 148 threads the bilayer; it reads YLVAAISAIITATVAGLFSTG. At 149-163 the chain is on the extracellular side; the sequence is RNLMYLGWFPYDFQA. Residues 164-184 traverse the membrane as a helical segment; that stretch reads TAAIYWISFSYQAIGSSLLIL. Residues 185–254 lie on the Cytoplasmic side of the membrane; sequence ENLANDSYPP…LLRSTLHLSQ (70 aa). A helical membrane pass occupies residues 255 to 275; that stretch reads LGQFLSSGINISITLINILFF. Over 276-285 the chain is Extracellular; the sequence is AENNFAMLYY. Residues 286-306 form a helical membrane-spanning segment; the sequence is AVFFAAMLIELFPSCYYGILM. Over 307–355 the chain is Cytoplasmic; the sequence is TMEFDKLPYAIFSSNWLKMDKRYNRSLIILMQLTLVPVNIKAGGIVGID. The helical transmembrane segment at 356–376 threads the bilayer; it reads MSAFFATVRMAYSFYTLALSF. The Extracellular portion of the chain corresponds to 377 to 378; it reads RV.

This sequence belongs to the insect chemoreceptor superfamily. Heteromeric odorant receptor channel (TC 1.A.69) family. Or2a subfamily. In terms of assembly, interacts with Orco. Complexes exist early in the endomembrane system in olfactory sensory neurons (OSNs), coupling these complexes to the conserved ciliary trafficking pathway. As to expression, expressed in 1-2 cells on the distal edge of the antenna but not the maxillary palp.

The protein localises to the cell membrane. Its function is as follows. Odorant receptor which mediates acceptance or avoidance behavior, depending on its substrates. The odorant receptor repertoire encodes a large collection of odor stimuli that vary widely in identity, intensity, and duration. May form a complex with Orco to form odorant-sensing units, providing sensitive and prolonged odorant signaling and calcium permeability. This chain is Odorant receptor 33a (Or33a), found in Drosophila melanogaster (Fruit fly).